Here is a 334-residue protein sequence, read N- to C-terminus: Ornithine carbamoyltransferase, catabolic (334 aa).

Carbamoyl phosphate-binding positions include 57 to 60, Q84, R108, and 135 to 138; these read STRT and HPTQ. L-ornithine contacts are provided by residues N168, D232, and 236–237; that span reads SM. Carbamoyl phosphate-binding positions include 274-275 and R321; that span reads CL.

Belongs to the aspartate/ornithine carbamoyltransferase superfamily. OTCase family.

The protein resides in the cytoplasm. The enzyme catalyses carbamoyl phosphate + L-ornithine = L-citrulline + phosphate + H(+). It participates in amino-acid degradation; L-arginine degradation via ADI pathway; carbamoyl phosphate from L-arginine: step 2/2. Reversibly catalyzes the transfer of the carbamoyl group from carbamoyl phosphate (CP) to the N(epsilon) atom of ornithine (ORN) to produce L-citrulline. The sequence is that of Ornithine carbamoyltransferase, catabolic (arcB) from Haemophilus influenzae (strain ATCC 51907 / DSM 11121 / KW20 / Rd).